Consider the following 217-residue polypeptide: Protein 33K (217 aa).

The disordered stretch occupies residues 1-142; it reads MPPKGNKQAI…KEKTSAIATR (142 aa). Residues 24-68 are compositionally biased toward acidic residues; it reads QWDEEEESWDDSQAEEVSDEEEMESWESLDEELEDKPPKDEEEEI. The span at 69–78 shows a compositional bias: low complexity; it reads IASAAAPSSK. A compositionally biased stretch (basic and acidic residues) spans 123–136; sequence KRSEKTTRPRKEKT. Residues 160-187 are necessary for nuclear subcellular location; the sequence is YAIFQQSRGQQLELKVKNRSLRSLTRSC. An RS-repeat; required for splicing enhancer activity region spans residues 166–186; sequence SRGQQLELKVKNRSLRSLTRS.

Belongs to the adenoviridae splicing factor family. In terms of assembly, homooligomer. Interacts with DBP; this interaction occurs at a unique vertex during genome packaging. Interacts with IVa2; this interaction occurs at a unique vertex during genome packaging and seems to potentiate IVa2 and 33K oligomerization. Post-translationally, phosphorylated in vitro by human PKA and PRKDC. PRKDC inhibits, whereas PKA activates the splicing factor.

The protein localises to the host nucleus. Functionally, promotes alternative splicing of late transcripts by promoting splicing at weak 3' splice sites. Required for the temporal activation of major late pre-mRNA splicing at late times of infection. Induces the splicing and expression of the late capsid vertex protein. In terms of biological role, probably functions as the small terminase that is part of the molecular motor that translocates genomic DNA in empty capsid during DNA packaging. This motor is located at a unique vertex and comprises at least the IVa2 ATPase, the small terminase 33K and probably a portal. Forms a ring-like structure of about 17 nm in which genomic DNA is translocated into the capsid. Stimulates IVa2 ATPase activity in the presence of the viral genome. Once the DNA is packaged, the terminase detaches: the 33K protein is present in the empty particles, but not in the mature virions. Also involved in virion assembly. This is Protein 33K from Human adenovirus F serotype 41 (HAdV-41).